A 507-amino-acid chain; its full sequence is Maturase K (507 aa).

Belongs to the intron maturase 2 family. MatK subfamily.

It localises to the plastid. The protein localises to the chloroplast. Usually encoded in the trnK tRNA gene intron. Probably assists in splicing its own and other chloroplast group II introns. This Calocedrus decurrens (California incense-cedar) protein is Maturase K.